The following is a 284-amino-acid chain: uncharacterized protein (284 aa).

Positions 1–24 are cleaved as a signal peptide; sequence MLYSRESRTTVLFLALVTSLTVLC. At 25 to 84 the chain is on the cytoplasmic side; the sequence is HSVDVTTVFTTSTITEITTVTAAPQPQNKAETALNTATNIIQTMQFLFNCAPFKWKGPLK. Residues 85–104 traverse the membrane as a helical segment; that stretch reads ITSCALNFIVLLLTAWGYLL. The Extracellular segment spans residues 105–284; the sequence is KYLQENKLNS…SVHMYSSSLL (180 aa). N270 carries an N-linked (GlcNAc...) asparagine glycan.

The protein to yeast YNL033w.

Its subcellular location is the cell membrane. This is an uncharacterized protein from Saccharomyces cerevisiae (strain ATCC 204508 / S288c) (Baker's yeast).